The following is a 105-amino-acid chain: Protein S100-A11 (105 aa).

Met1 carries the post-translational modification N-acetylmethionine. Residue Ala2 is modified to N-acetylalanine; in Protein S100-A11, N-terminally processed. The residue at position 3 (Lys3) is an N6-acetyllysine. Phosphoserine occurs at positions 5 and 6. Residue Thr10 is modified to Phosphothreonine. EF-hand domains lie at 13–49 and 55–90; these read CIESLIAVFQKYAGKDGYNYTLSKTEFLSFMNTELAA and KDPGVLDRMMKKLDTNSDGQLDFSEFLNLIGGLAMA. Lys27 is modified (N6-acetyllysine). The Ca(2+) site is built by Thr33, Glu38, Asp68, Asn70, Asp72, Gln74, and Glu79.

The protein belongs to the S-100 family. As to quaternary structure, homodimer; disulfide-linked. Phosphorylation at Thr-10 by PRKCA significantly suppresses homodimerization and promotes association with NCL/nucleolin which induces nuclear translocation.

The protein resides in the cytoplasm. Its subcellular location is the nucleus. Its function is as follows. Facilitates the differentiation and the cornification of keratinocytes. The sequence is that of Protein S100-A11 (S100A11) from Homo sapiens (Human).